Here is a 209-residue protein sequence, read N- to C-terminus: Holliday junction branch migration complex subunit RuvA (209 aa).

The domain I stretch occupies residues 1–70; sequence MINYLRGQAI…EEQPLLYGFG (70 aa). Residues 71–149 form a domain II region; that stretch reads TAPERELFRQ…AWRQLREATT (79 aa). The tract at residues 150 to 158 is flexible linker; that stretch reads TITAILPAA. The segment at 158-209 is domain III; it reads AAILEDVQMTLLALGYSQEEIDRAMAVLSQDALFSKNTQPEDWIKGAINWLG.

Belongs to the RuvA family. Homotetramer. Forms an RuvA(8)-RuvB(12)-Holliday junction (HJ) complex. HJ DNA is sandwiched between 2 RuvA tetramers; dsDNA enters through RuvA and exits via RuvB. An RuvB hexamer assembles on each DNA strand where it exits the tetramer. Each RuvB hexamer is contacted by two RuvA subunits (via domain III) on 2 adjacent RuvB subunits; this complex drives branch migration. In the full resolvosome a probable DNA-RuvA(4)-RuvB(12)-RuvC(2) complex forms which resolves the HJ.

The protein localises to the cytoplasm. Its function is as follows. The RuvA-RuvB-RuvC complex processes Holliday junction (HJ) DNA during genetic recombination and DNA repair, while the RuvA-RuvB complex plays an important role in the rescue of blocked DNA replication forks via replication fork reversal (RFR). RuvA specifically binds to HJ cruciform DNA, conferring on it an open structure. The RuvB hexamer acts as an ATP-dependent pump, pulling dsDNA into and through the RuvAB complex. HJ branch migration allows RuvC to scan DNA until it finds its consensus sequence, where it cleaves and resolves the cruciform DNA. The sequence is that of Holliday junction branch migration complex subunit RuvA from Microcystis aeruginosa (strain NIES-843 / IAM M-2473).